The following is a 155-amino-acid chain: 3-hydroxyacyl-[acyl-carrier-protein] dehydratase FabZ (155 aa).

Residue His54 is part of the active site.

Belongs to the thioester dehydratase family. FabZ subfamily.

The protein resides in the cytoplasm. It carries out the reaction a (3R)-hydroxyacyl-[ACP] = a (2E)-enoyl-[ACP] + H2O. Functionally, involved in unsaturated fatty acids biosynthesis. Catalyzes the dehydration of short chain beta-hydroxyacyl-ACPs and long chain saturated and unsaturated beta-hydroxyacyl-ACPs. This Burkholderia mallei (strain NCTC 10247) protein is 3-hydroxyacyl-[acyl-carrier-protein] dehydratase FabZ.